A 195-amino-acid polypeptide reads, in one-letter code: Imidazoleglycerol-phosphate dehydratase (195 aa).

This sequence belongs to the imidazoleglycerol-phosphate dehydratase family.

It localises to the cytoplasm. The catalysed reaction is D-erythro-1-(imidazol-4-yl)glycerol 3-phosphate = 3-(imidazol-4-yl)-2-oxopropyl phosphate + H2O. It functions in the pathway amino-acid biosynthesis; L-histidine biosynthesis; L-histidine from 5-phospho-alpha-D-ribose 1-diphosphate: step 6/9. The sequence is that of Imidazoleglycerol-phosphate dehydratase from Burkholderia ambifaria (strain MC40-6).